The chain runs to 430 residues: Ribosomal protein uS12 methylthiotransferase RimO (430 aa).

The 117-residue stretch at 2-118 (AKIFTISLGC…IDNVIKRPKH (117 aa)) folds into the MTTase N-terminal domain. Residues Cys11, Cys47, Cys81, Cys150, Cys154, and Cys157 each contribute to the [4Fe-4S] cluster site. One can recognise a Radical SAM core domain in the interval 136-368 (LTAPHSAYLK…AQSRVIDSIN (233 aa)). In terms of domain architecture, TRAM spans 369 to 430 (RKLKGKTVKV…KGYNRTGKII (62 aa)).

It belongs to the methylthiotransferase family. RimO subfamily. [4Fe-4S] cluster serves as cofactor.

It localises to the cytoplasm. The enzyme catalyses L-aspartate(89)-[ribosomal protein uS12]-hydrogen + (sulfur carrier)-SH + AH2 + 2 S-adenosyl-L-methionine = 3-methylsulfanyl-L-aspartate(89)-[ribosomal protein uS12]-hydrogen + (sulfur carrier)-H + 5'-deoxyadenosine + L-methionine + A + S-adenosyl-L-homocysteine + 2 H(+). In terms of biological role, catalyzes the methylthiolation of an aspartic acid residue of ribosomal protein uS12. The sequence is that of Ribosomal protein uS12 methylthiotransferase RimO from Elusimicrobium minutum (strain Pei191).